Here is a 433-residue protein sequence, read N- to C-terminus: uncharacterized protein (433 aa).

It localises to the virion. This is an uncharacterized protein from Acanthamoeba polyphaga (Amoeba).